Here is a 412-residue protein sequence, read N- to C-terminus: Flap endonuclease 1-B (412 aa).

The N-domain stretch occupies residues 1-105 (MGIKGLTKLL…KELAKRSLKR (105 aa)). Position 34 (D34) interacts with Mg(2+). A DNA-binding site is contributed by R71. Positions 87, 159, 161, 180, and 182 each coordinate Mg(2+). The segment at 123-254 (LIEKFSKRTV…QRALKLIRQH (132 aa)) is I-domain. Position 159 (E159) interacts with DNA. Residues G232 and D234 each coordinate DNA. Position 234 (D234) interacts with Mg(2+).

It belongs to the XPG/RAD2 endonuclease family. FEN1 subfamily. Interacts with PCNA. Three molecules of FEN1 bind to one PCNA trimer with each molecule binding to one PCNA monomer. PCNA stimulates the nuclease activity without altering cleavage specificity. It depends on Mg(2+) as a cofactor. Phosphorylated. Phosphorylation upon DNA damage induces relocalization to the nuclear plasma.

The protein localises to the nucleus. It is found in the nucleolus. The protein resides in the nucleoplasm. Its subcellular location is the mitochondrion. Its function is as follows. Structure-specific nuclease with 5'-flap endonuclease and 5'-3' exonuclease activities involved in DNA replication and repair. During DNA replication, cleaves the 5'-overhanging flap structure that is generated by displacement synthesis when DNA polymerase encounters the 5'-end of a downstream Okazaki fragment. It enters the flap from the 5'-end and then tracks to cleave the flap base, leaving a nick for ligation. Also involved in the long patch base excision repair (LP-BER) pathway, by cleaving within the apurinic/apyrimidinic (AP) site-terminated flap. Acts as a genome stabilization factor that prevents flaps from equilibrating into structures that lead to duplications and deletions. Also possesses 5'-3' exonuclease activity on nicked or gapped double-stranded DNA, and exhibits RNase H activity. Also involved in replication and repair of rDNA and in repairing mitochondrial DNA. The polypeptide is Flap endonuclease 1-B (Oryza sativa subsp. indica (Rice)).